Consider the following 434-residue polypeptide: Tubulin gamma chain (434 aa).

Residue 135–141 participates in GTP binding; it reads AGGTGSG.

This sequence belongs to the tubulin family.

The protein localises to the cytoplasm. The protein resides in the cytoskeleton. It localises to the microtubule organizing center. It is found in the spindle pole body. Tubulin is the major constituent of microtubules. The gamma chain is found at microtubule organizing centers (MTOC) such as the spindle poles or the centrosome, suggesting that it is involved in the minus-end nucleation of microtubule assembly. The chain is Tubulin gamma chain (TUB4) from Encephalitozoon cuniculi (strain GB-M1) (Microsporidian parasite).